We begin with the raw amino-acid sequence, 206 residues long: Small ribosomal subunit protein uS4 (206 aa).

Residues 96–158 (SRLDNVVYRM…AKGQLRIKGA (63 aa)) form the S4 RNA-binding domain.

It belongs to the universal ribosomal protein uS4 family. As to quaternary structure, part of the 30S ribosomal subunit. Contacts protein S5. The interaction surface between S4 and S5 is involved in control of translational fidelity.

Functionally, one of the primary rRNA binding proteins, it binds directly to 16S rRNA where it nucleates assembly of the body of the 30S subunit. Its function is as follows. With S5 and S12 plays an important role in translational accuracy. In Coxiella burnetii (strain CbuG_Q212) (Coxiella burnetii (strain Q212)), this protein is Small ribosomal subunit protein uS4.